A 423-amino-acid chain; its full sequence is SH2 domain-containing adapter protein F (423 aa).

Disordered regions lie at residues 1–87 (MQQE…STTR), 110–208 (DPFD…WEWK), and 225–312 (DLPW…GEWT). The span at 192-203 (EDDERPPEEYDQ) shows a compositional bias: acidic residues. The residue at position 201 (Y201) is a Phosphotyrosine. One can recognise an SH2 domain in the interval 323–418 (WYHGAISRTD…AEHMSLLYPV (96 aa)).

As to quaternary structure, interacts with phosphorylated 'Tyr-720' of PDGFRA via its SH2 domain. Post-translationally, may become phosphorylated upon binding to PDGFRA. As to expression, expressed in skeletal muscle, brain, liver, prostate, testis, ovary, small intestine and colon.

Adapter protein which may play a role in the regulation of apoptosis in response to PDGF. This chain is SH2 domain-containing adapter protein F, found in Homo sapiens (Human).